The chain runs to 179 residues: MSRIGKQPIPVPAGVDVTIEGQSISVKGPKGTLGLTVAEPIKVARNDDGAIVVTRPDDERRNRSLHGLSRTLVSNLVTGVTQGYTTKMEIFGVGYRVQLKGSNLEFALGYSHPVVIEAPEGITFAVQAPTKFTVSGIDKQKVGQIAANIRRLRRPDPYKGKGVRYEGEQIRRKVGKTGK.

Belongs to the universal ribosomal protein uL6 family. In terms of assembly, part of the 50S ribosomal subunit.

Its function is as follows. This protein binds to the 23S rRNA, and is important in its secondary structure. It is located near the subunit interface in the base of the L7/L12 stalk, and near the tRNA binding site of the peptidyltransferase center. This chain is Large ribosomal subunit protein uL6, found in Mycobacterium tuberculosis (strain ATCC 25618 / H37Rv).